Consider the following 189-residue polypeptide: Parkinson disease protein 7 homolog (189 aa).

Ala2 is modified (N-acetylalanine). Residues Cys46 and Cys53 are each lipidated (S-palmitoyl cysteine). Tyr67 is modified (phosphotyrosine). Residue Cys106 is the Nucleophile of the active site. At Cys106 the chain carries Cysteine sulfinic acid (-SO2H); alternate. Cys106 carries the S-palmitoyl cysteine; alternate lipid modification. His126 is a catalytic residue. Lys130 is covalently cross-linked (Glycyl lysine isopeptide (Lys-Gly) (interchain with G-Cter in SUMO)). Position 148 is an N6-acetyllysine (Lys148). Residue Lys182 is modified to N6-succinyllysine.

It belongs to the peptidase C56 family. In terms of assembly, homodimer. Binds EFCAB6/DJBP and PIAS2. Part of a ternary complex containing PARK7, EFCAB6/DJBP and AR. Interacts (via N-terminus) with OTUD7B. Interacts with BBS1, HIPK1, CLCF1 and MTERF. Forms a complex with PINK1 and PRKN. Interacts (via C-terminus) with NCF1; the interaction is enhanced by LPS and modulates NCF1 phosphorylation and membrane translocation. Interacts with NENF. Deglycase activity does not require glutathione as a cofactor, however, glycated glutathione constitutes a PARK7 substrate. serves as cofactor. Sumoylated on Lys-130 by PIAS2 or PIAS4; which is essential for cell-growth promoting activity and transforming activity. In terms of processing, undergoes cleavage of a C-terminal peptide and subsequent activation of protease activity in response to oxidative stress. In terms of tissue distribution, ubiquitous. Detected on epididymal sperm. Highly expressed in testis and prostate. Detected at lower levels in heart, lung, brain, liver, kidney, seminal vesicle, caput and corpus epididymis.

Its subcellular location is the cell membrane. It is found in the cytoplasm. The protein localises to the membrane raft. The protein resides in the nucleus. It localises to the mitochondrion. Its subcellular location is the endoplasmic reticulum. It catalyses the reaction N(omega)-(1-hydroxy-2-oxopropyl)-L-arginyl-[protein] + H2O = lactate + L-arginyl-[protein] + H(+). The enzyme catalyses N(6)-(1-hydroxy-2-oxopropyl)-L-lysyl-[protein] + H2O = lactate + L-lysyl-[protein] + H(+). It carries out the reaction S-(1-hydroxy-2-oxopropyl)-L-cysteinyl-[protein] + H2O = lactate + L-cysteinyl-[protein] + H(+). The catalysed reaction is N(omega)-(1-hydroxy-2-oxoethyl)-L-arginyl-[protein] + H2O = L-arginyl-[protein] + glycolate + H(+). It catalyses the reaction N(6)-(1-hydroxy-2-oxoethyl)-L-lysyl-[protein] + H2O = glycolate + L-lysyl-[protein] + H(+). The enzyme catalyses S-(1-hydroxy-2-oxoethyl)-L-cysteinyl-[protein] + H2O = glycolate + L-cysteinyl-[protein] + H(+). It carries out the reaction N(2)-(1-hydroxy-2-oxopropyl)-dGTP + H2O = lactate + dGTP + H(+). The catalysed reaction is N(2)-(1-hydroxy-2-oxopropyl)-GTP + H2O = lactate + GTP + H(+). It catalyses the reaction N(2)-(1-hydroxy-2-oxopropyl)-GDP + H2O = lactate + GDP + H(+). The enzyme catalyses N(2)-(1-hydroxy-2-oxopropyl)-GMP + H2O = lactate + GMP + H(+). It carries out the reaction N(2)-(1-hydroxy-2-oxoethyl)-dGTP + H2O = dGTP + glycolate + H(+). The catalysed reaction is N(2)-(1-hydroxy-2-oxoethyl)-GTP + H2O = glycolate + GTP + H(+). It catalyses the reaction N(2)-(1-hydroxy-2-oxoethyl)-GDP + H2O = glycolate + GDP + H(+). The enzyme catalyses N(2)-(1-hydroxy-2-oxoethyl)-GMP + H2O = glycolate + GMP + H(+). It carries out the reaction an N(2)-(1-hydroxy-2-oxopropyl)-guanosine in RNA + H2O = a guanosine in RNA + lactate + H(+). The catalysed reaction is an N(2)-(1-hydroxy-2-oxopropyl)-2'-deoxyguanosine in DNA + H2O = a 2'-deoxyguanosine in DNA + lactate + H(+). It catalyses the reaction an N(2)-(1-hydroxy-2-oxoethyl)-guanosine in RNA + H2O = a guanosine in RNA + glycolate + H(+). The enzyme catalyses an N(2)-(1-hydroxy-2-oxoethyl)-2'-deoxyguanosine in DNA + H2O = a 2'-deoxyguanosine in DNA + glycolate + H(+). Its function is as follows. Protein and nucleotide deglycase that catalyzes the deglycation of the Maillard adducts formed between amino groups of proteins or nucleotides and reactive carbonyl groups of glyoxals. Thus, functions as a protein deglycase that repairs methylglyoxal- and glyoxal-glycated proteins, and releases repaired proteins and lactate or glycolate, respectively. Deglycates cysteine, arginine and lysine residues in proteins, and thus reactivates these proteins by reversing glycation by glyoxals. Acts on early glycation intermediates (hemithioacetals and aminocarbinols), preventing the formation of advanced glycation endproducts (AGE) that cause irreversible damage. Also functions as a nucleotide deglycase able to repair glycated guanine in the free nucleotide pool (GTP, GDP, GMP, dGTP) and in DNA and RNA. Is thus involved in a major nucleotide repair system named guanine glycation repair (GG repair), dedicated to reversing methylglyoxal and glyoxal damage via nucleotide sanitization and direct nucleic acid repair. Also displays an apparent glyoxalase activity that in fact reflects its deglycase activity. Plays an important role in cell protection against oxidative stress and cell death acting as oxidative stress sensor and redox-sensitive chaperone and protease; functions probably related to its primary function. It is involved in neuroprotective mechanisms like the stabilization of NFE2L2 and PINK1 proteins, male fertility as a positive regulator of androgen signaling pathway as well as cell growth and transformation through, for instance, the modulation of NF-kappa-B signaling pathway. Eliminates hydrogen peroxide and protects cells against hydrogen peroxide-induced cell death. Required for correct mitochondrial morphology and function as well as for autophagy of dysfunctional mitochondria. Plays a role in regulating expression or stability of the mitochondrial uncoupling proteins SLC25A14 and SLC25A27 in dopaminergic neurons of the substantia nigra pars compacta and attenuates the oxidative stress induced by calcium entry into the neurons via L-type channels during pacemaking. Regulates astrocyte inflammatory responses, may modulate lipid rafts-dependent endocytosis in astrocytes and neuronal cells. In pancreatic islets, involved in the maintenance of mitochondrial reactive oxygen species (ROS) levels and glucose homeostasis in an age- and diet dependent manner. Protects pancreatic beta cells from cell death induced by inflammatory and cytotoxic setting. Binds to a number of mRNAs containing multiple copies of GG or CC motifs and partially inhibits their translation but dissociates following oxidative stress. Metal-binding protein able to bind copper as well as toxic mercury ions, enhances the cell protection mechanism against induced metal toxicity. In macrophages, interacts with the NADPH oxidase subunit NCF1 to direct NADPH oxidase-dependent ROS production, and protects against sepsis. This chain is Parkinson disease protein 7 homolog, found in Rattus norvegicus (Rat).